The sequence spans 334 residues: Serine racemase (334 aa).

Position 13 (Glu-13) interacts with Mg(2+). ATP contacts are provided by Ser-31, Ser-32, Ile-33, Lys-51, and Thr-52. Residues Lys-56 and Ser-84 each act as proton acceptor in the active site. An N6-(pyridoxal phosphate)lysine modification is found at Lys-56. Asn-86 lines the pyridoxal 5'-phosphate pocket. Gln-89 contributes to the ATP binding site. An S-nitrosocysteine modification is found at Cys-113. Tyr-121 contributes to the ATP binding site. Asn-154 contacts pyridoxal 5'-phosphate. Asp-178 contacts Mg(2+). Residues Gly-185, Gly-186, Gly-187, Gly-188, and Met-189 each coordinate pyridoxal 5'-phosphate. Residues Glu-210, Ala-214, Asp-216, and Asn-247 each coordinate Mg(2+). Residues Glu-210, Ala-214, Asp-216, and Asn-247 each coordinate Ca(2+). Residues Glu-210, Ala-214, and Asp-216 each contribute to the Mn(2+) site. Lys-279 serves as a coordination point for ATP. Pyridoxal 5'-phosphate is bound at residue Ser-313. An ATP-binding site is contributed by Asn-316.

This sequence belongs to the serine/threonine dehydratase family. In terms of assembly, homodimer. It depends on Mg(2+) as a cofactor. Requires Mn(2+) as cofactor. Ca(2+) serves as cofactor. Pyridoxal 5'-phosphate is required as a cofactor. Post-translationally, S-nitrosylated, leading to decrease the enzyme activity.

The enzyme catalyses L-serine = D-serine. It catalyses the reaction L-serine = pyruvate + NH4(+). The catalysed reaction is D-serine = pyruvate + NH4(+). Catalyzes the synthesis of D-serine from L-serine. D-serine is a key coagonist with glutamate at NMDA receptors. Has dehydratase activity towards both L-serine and D-serine. The polypeptide is Serine racemase (SRR) (Bos taurus (Bovine)).